The primary structure comprises 425 residues: uncharacterized protein (425 aa).

The CHY-type zinc-finger motif lies at 135-202 (KEQEILGCSH…AAQYCKYCKN (68 aa)). Residues Cys142, His144, Cys153, Cys156, Cys162, Cys165, His166, His172, Cys184, Cys187, Cys197, Cys200, Cys209, Cys212, His225, Cys226, Cys229, Cys232, His244, Cys245, Cys248, Cys251, His260, and Cys262 each coordinate Zn(2+). The CTCHY-type zinc-finger motif lies at 204-270 (MGRYYCNKCK…RCIERSTDCN (67 aa)). The segment at 271–313 (CPICGEYMFNSRERVIFLSCSHPLHQRCHEEYIRTNYRCPTCY) adopts an RING-type; atypical zinc-finger fold.

This is an uncharacterized protein from Schizosaccharomyces pombe (strain 972 / ATCC 24843) (Fission yeast).